The sequence spans 875 residues: MSKSTAEIRQAFLDFFHSKGHQVVSSSTLVPNNDPTLLFTNAGMNQFKDVFLGLDKRAYSRATTSQRCVRAGGKHNDLENVGYTARHHTFFEMLGNFSFGDYFKHDAINFAWELLTSEQWFNLPKEKLWVTVYETDDEAYNIWANEVGVPHERIIRIGDNKGGAFASDNFWQMGDTGPCGPCSEIFFDHGDHIWGGPPGSAEEDGDRYIEIWNIVFMQFNRQSDGTMLPLPKPSVDTGMGLERIAAVLQHVNSNYEIDLFRDLIAAVADVTGATDLSSKSLRVIADHIRSCAFLISDGVIPSNENRGYVLRRIIRRAIRHGNMLGAKETFFYKLVAPLIAVMGPAAAELKQQQAMVEQVLKTEEEQFARTLERGLALLDDELSKLTGDTLDGETAFRLYDTYGFPVDLTADVCRERNLKVDEAGFEQAMEAQRRRARESSGFGADYNSLIRVDSASQFSGYDHVQQHATVTALFRNGEAVDEIHAGEEAVVVLNRTPFYGESGGQVGDKGELKNATATFSVTDTQKYGQAIGHVGILTTGTLRVNHSVEALVDVVRRNRIRLNHSATHLLHAALRNVLGEHVAQKGSLVNDKYLRFDFSHFEAMKPEQIRLVEDLVNEQIRRNMPVQTEVMELDAAKEKGAMALFGEKYDDQVRVLTMGDFSTELCGGTHASRTGDIGLFRILTESGTAAGIRRIEAVTGEGAIALLHQQSDLLQDVAHLVKGDIHNLADKVRAVLDRSKMLERELQQLKDQQAAQESASLSSSAKLINGVKLLVSQLDNVEPKMLRTMVDDLKNQLGSAIIVLATTADDKVSLIVGVTKDLTGKVKAGELIADIAQQVGGKGGGRPDMAQAGGTDVQALPAALASVEAWVASRM.

Zn(2+)-binding residues include His564, His568, Cys666, and His670.

Belongs to the class-II aminoacyl-tRNA synthetase family. In terms of assembly, homotetramer. Zn(2+) is required as a cofactor.

Its subcellular location is the cytoplasm. It carries out the reaction tRNA(Ala) + L-alanine + ATP = L-alanyl-tRNA(Ala) + AMP + diphosphate. Its function is as follows. Catalyzes the attachment of alanine to tRNA(Ala) in a two-step reaction: alanine is first activated by ATP to form Ala-AMP and then transferred to the acceptor end of tRNA(Ala). Also edits incorrectly charged Ser-tRNA(Ala) and Gly-tRNA(Ala) via its editing domain. This is Alanine--tRNA ligase from Yersinia pestis bv. Antiqua (strain Angola).